A 161-amino-acid polypeptide reads, in one-letter code: Probable chemoreceptor glutamine deamidase CheD (161 aa).

It belongs to the CheD family.

The enzyme catalyses L-glutaminyl-[protein] + H2O = L-glutamyl-[protein] + NH4(+). Its function is as follows. Probably deamidates glutamine residues to glutamate on methyl-accepting chemotaxis receptors (MCPs), playing an important role in chemotaxis. The polypeptide is Probable chemoreceptor glutamine deamidase CheD (Thermococcus kodakarensis (strain ATCC BAA-918 / JCM 12380 / KOD1) (Pyrococcus kodakaraensis (strain KOD1))).